The sequence spans 379 residues: uncharacterized protein (379 aa).

This is an uncharacterized protein from Shouchella clausii (Alkalihalobacillus clausii).